A 199-amino-acid polypeptide reads, in one-letter code: Transgelin-2 (199 aa).

Ala2 is modified (N-acetylalanine). Ser11 bears the Phosphoserine mark. 2 positions are modified to N6-acetyllysine: Lys17 and Lys20. The 113-residue stretch at 24 to 136 (PDLEQILIQW…RTLMNLGGLA (113 aa)) folds into the Calponin-homology (CH) domain. Ser163 is subject to Phosphoserine. Lys171 is covalently cross-linked (Glycyl lysine isopeptide (Lys-Gly) (interchain with G-Cter in SUMO2)). One copy of the Calponin-like repeat lies at 174-199 (IGLQMGTNRGASQAGMTGYGMPRQIL). At Thr180 the chain carries Phosphothreonine. Omega-N-methylarginine occurs at positions 182 and 196.

Belongs to the calponin family.

The protein is Transgelin-2 (Tagln2) of Rattus norvegicus (Rat).